A 106-amino-acid chain; its full sequence is Stress-responsive protein 1 (106 aa).

Its subcellular location is the mitochondrion. In terms of biological role, stress-responsive protein that may play a role in regulation of cell cycle. In Schizosaccharomyces pombe (strain 972 / ATCC 24843) (Fission yeast), this protein is Stress-responsive protein 1 (sro1).